A 438-amino-acid polypeptide reads, in one-letter code: Putative galacturan 1,4-alpha-galacturonidase A (438 aa).

The signal sequence occupies residues 1–21 (MRMPSAISIGVFAGLSLAASA). Asparagine 28, asparagine 102, asparagine 111, and asparagine 197 each carry an N-linked (GlcNAc...) asparagine glycan. PbH1 repeat units lie at residues 186-222 (SSHINLDNFYVNATNHDSSVSPEGEWVQNTDGIDTYR) and 223-244 (SDHITITNWVYQGGDDAVAFKG). Aspartate 237 functions as the Proton donor in the catalytic mechanism. 7 N-linked (GlcNAc...) asparagine glycosylation sites follow: asparagine 245, asparagine 253, asparagine 279, asparagine 325, asparagine 353, asparagine 372, and asparagine 388. PbH1 repeat units follow at residues 246–266 (STNIHVENVTVYGGPGIAFGS), 277–303 (VENVTVRNVRVQPSFQRAMNSGVYFKS), and 323–344 (VRNVSVENLRLKDVQLPVYIDT). Cysteine 397 and cysteine 403 are disulfide-bonded. N-linked (GlcNAc...) asparagine glycosylation is present at asparagine 418.

This sequence belongs to the glycosyl hydrolase 28 family.

It localises to the secreted. It catalyses the reaction [(1-&gt;4)-alpha-D-galacturonosyl](n) + H2O = alpha-D-galacturonate + [(1-&gt;4)-alpha-D-galacturonosyl](n-1). Functionally, specific in hydrolyzing the terminal glycosidic bond of polygalacturonic acid and oligogalacturonates. The polypeptide is Putative galacturan 1,4-alpha-galacturonidase A (rgxA) (Aspergillus niger).